Consider the following 492-residue polypeptide: GlcNAc-binding protein A (492 aa).

A signal peptide spans 1–23; the sequence is MNKSSTKTLIALSMMAVSSGVSA. Residues 24-204 form the Chitin-binding type-4 domain; that stretch reads HGYVSETNDG…AFYNVIDVKF (181 aa). In terms of domain architecture, Chitin-binding type-3 spans 443 to 484; that stretch reads AGTKVLAEDSNVYQCKEFPYSGYCVQWTETATNFAPGVGSDW.

Belongs to the GbpA family.

The protein resides in the secreted. Probably interacts with GlcNAc residues. May promote attachment to both epithelial cell surfaces and chitin. This chain is GlcNAc-binding protein A, found in Aliivibrio fischeri (strain MJ11) (Vibrio fischeri).